A 504-amino-acid polypeptide reads, in one-letter code: Glucose-6-phosphate isomerase (504 aa).

Glutamate 333 serves as the catalytic Proton donor. Residues histidine 364 and lysine 473 contribute to the active site.

The protein belongs to the GPI family.

It localises to the cytoplasm. It catalyses the reaction alpha-D-glucose 6-phosphate = beta-D-fructose 6-phosphate. It participates in carbohydrate biosynthesis; gluconeogenesis. It functions in the pathway carbohydrate degradation; glycolysis; D-glyceraldehyde 3-phosphate and glycerone phosphate from D-glucose: step 2/4. Its function is as follows. Catalyzes the reversible isomerization of glucose-6-phosphate to fructose-6-phosphate. This chain is Glucose-6-phosphate isomerase, found in Xanthomonas oryzae pv. oryzae (strain KACC10331 / KXO85).